We begin with the raw amino-acid sequence, 367 residues long: Holliday junction branch migration complex subunit RuvB (367 aa).

Residues 2–196 form a large ATPase domain (RuvB-L) region; that stretch reads TDEPLTDRPP…FGFTARLDFY (195 aa). ATP is bound by residues Leu35, Arg36, Gly77, Lys80, Thr81, Thr82, 143–145, Arg186, Tyr196, and Arg233; that span reads EDF. Thr81 is a Mg(2+) binding site. A small ATPAse domain (RuvB-S) region spans residues 197-267; the sequence is EPADLERIVH…VAQAALAVYE (71 aa). Positions 270–367 are head domain (RuvB-H); that stretch reads EHGLDRLDRA…IDRDAGEPTA (98 aa). DNA-binding residues include Arg325 and Arg330.

The protein belongs to the RuvB family. In terms of assembly, homohexamer. Forms an RuvA(8)-RuvB(12)-Holliday junction (HJ) complex. HJ DNA is sandwiched between 2 RuvA tetramers; dsDNA enters through RuvA and exits via RuvB. An RuvB hexamer assembles on each DNA strand where it exits the tetramer. Each RuvB hexamer is contacted by two RuvA subunits (via domain III) on 2 adjacent RuvB subunits; this complex drives branch migration. In the full resolvosome a probable DNA-RuvA(4)-RuvB(12)-RuvC(2) complex forms which resolves the HJ.

The protein resides in the cytoplasm. It catalyses the reaction ATP + H2O = ADP + phosphate + H(+). In terms of biological role, the RuvA-RuvB-RuvC complex processes Holliday junction (HJ) DNA during genetic recombination and DNA repair, while the RuvA-RuvB complex plays an important role in the rescue of blocked DNA replication forks via replication fork reversal (RFR). RuvA specifically binds to HJ cruciform DNA, conferring on it an open structure. The RuvB hexamer acts as an ATP-dependent pump, pulling dsDNA into and through the RuvAB complex. RuvB forms 2 homohexamers on either side of HJ DNA bound by 1 or 2 RuvA tetramers; 4 subunits per hexamer contact DNA at a time. Coordinated motions by a converter formed by DNA-disengaged RuvB subunits stimulates ATP hydrolysis and nucleotide exchange. Immobilization of the converter enables RuvB to convert the ATP-contained energy into a lever motion, pulling 2 nucleotides of DNA out of the RuvA tetramer per ATP hydrolyzed, thus driving DNA branch migration. The RuvB motors rotate together with the DNA substrate, which together with the progressing nucleotide cycle form the mechanistic basis for DNA recombination by continuous HJ branch migration. Branch migration allows RuvC to scan DNA until it finds its consensus sequence, where it cleaves and resolves cruciform DNA. The polypeptide is Holliday junction branch migration complex subunit RuvB (Acidothermus cellulolyticus (strain ATCC 43068 / DSM 8971 / 11B)).